Consider the following 808-residue polypeptide: ATP-dependent 6-phosphofructokinase (808 aa).

Residues 1 to 21 (MSSTQAPVEPPKRRRIGVLTS) are disordered. Residues 1–389 (MSSTQAPVEP…YHFAYRNTAT (389 aa)) form an N-terminal catalytic PFK domain 1 region. ATP-binding positions include Gly23, 86–87 (RS), and 116–119 (GDGS). Asp117 serves as a coordination point for Mg(2+). Substrate contacts are provided by residues 162 to 164 (SID), Arg199, 206 to 208 (MGR), Glu263, Arg291, and 297 to 300 (HTQR). Catalysis depends on Asp164, which acts as the Proton acceptor. An interdomain linker region spans residues 390–403 (PDHPKMILPQDKRM). The interval 404-808 (RIAIIHVGAP…DIDPSALTSS (405 aa)) is C-terminal regulatory PFK domain 2. Beta-D-fructose 2,6-bisphosphate contacts are provided by residues Arg480, 537–541 (TISNN), Arg575, 582–584 (QGG), Glu642, Arg668, 674–677 (HFQQ), and Arg749.

It belongs to the phosphofructokinase type A (PFKA) family. ATP-dependent PFK group I subfamily. Eukaryotic two domain clade 'E' sub-subfamily. In terms of assembly, homotetramer. Requires Mg(2+) as cofactor.

It localises to the cytoplasm. It catalyses the reaction beta-D-fructose 6-phosphate + ATP = beta-D-fructose 1,6-bisphosphate + ADP + H(+). It functions in the pathway carbohydrate degradation; glycolysis; D-glyceraldehyde 3-phosphate and glycerone phosphate from D-glucose: step 3/4. Its activity is regulated as follows. Allosterically activated by ADP, AMP, or fructose 2,6-bisphosphate, and allosterically inhibited by ATP or citrate. Catalyzes the phosphorylation of D-fructose 6-phosphate to fructose 1,6-bisphosphate by ATP, the first committing step of glycolysis. This is ATP-dependent 6-phosphofructokinase (pfkA) from Aspergillus fumigatus (strain ATCC MYA-4609 / CBS 101355 / FGSC A1100 / Af293) (Neosartorya fumigata).